The chain runs to 155 residues: uncharacterized protein (155 aa).

It belongs to the mimivirus L6/L7/L57 family.

This is an uncharacterized protein from Acanthamoeba polyphaga (Amoeba).